Here is a 141-residue protein sequence, read N- to C-terminus: Large ribosomal subunit protein uL11 (141 aa).

Belongs to the universal ribosomal protein uL11 family. In terms of assembly, part of the ribosomal stalk of the 50S ribosomal subunit. Interacts with L10 and the large rRNA to form the base of the stalk. L10 forms an elongated spine to which L12 dimers bind in a sequential fashion forming a multimeric L10(L12)X complex. One or more lysine residues are methylated.

Functionally, forms part of the ribosomal stalk which helps the ribosome interact with GTP-bound translation factors. In Clostridium tetani (strain Massachusetts / E88), this protein is Large ribosomal subunit protein uL11.